The chain runs to 304 residues: Oxygen-dependent coproporphyrinogen-III oxidase (304 aa).

Serine 93 contacts substrate. A divalent metal cation contacts are provided by histidine 97 and histidine 107. Histidine 107 (proton donor) is an active-site residue. 109–111 (NVR) is a binding site for substrate. Residues histidine 146 and histidine 176 each contribute to the a divalent metal cation site. The important for dimerization stretch occupies residues 241–276 (YVEFNLVYDRGTLFGLQSGGRTESILMSLPPQVRWG). 259 to 261 (GGR) serves as a coordination point for substrate.

This sequence belongs to the aerobic coproporphyrinogen-III oxidase family. In terms of assembly, homodimer. A divalent metal cation is required as a cofactor.

The protein localises to the cytoplasm. It catalyses the reaction coproporphyrinogen III + O2 + 2 H(+) = protoporphyrinogen IX + 2 CO2 + 2 H2O. Its pathway is porphyrin-containing compound metabolism; protoporphyrin-IX biosynthesis; protoporphyrinogen-IX from coproporphyrinogen-III (O2 route): step 1/1. Functionally, involved in the heme biosynthesis. Catalyzes the aerobic oxidative decarboxylation of propionate groups of rings A and B of coproporphyrinogen-III to yield the vinyl groups in protoporphyrinogen-IX. This Pseudomonas syringae pv. syringae (strain B728a) protein is Oxygen-dependent coproporphyrinogen-III oxidase.